A 327-amino-acid polypeptide reads, in one-letter code: Lipoyl synthase (327 aa).

7 residues coordinate [4Fe-4S] cluster: C66, C71, C77, C92, C96, C99, and S306. The Radical SAM core domain occupies 78 to 295 (FSKGTATFMI…EKEAYELGFS (218 aa)).

This sequence belongs to the radical SAM superfamily. Lipoyl synthase family. Requires [4Fe-4S] cluster as cofactor.

The protein resides in the cytoplasm. It catalyses the reaction [[Fe-S] cluster scaffold protein carrying a second [4Fe-4S](2+) cluster] + N(6)-octanoyl-L-lysyl-[protein] + 2 oxidized [2Fe-2S]-[ferredoxin] + 2 S-adenosyl-L-methionine + 4 H(+) = [[Fe-S] cluster scaffold protein] + N(6)-[(R)-dihydrolipoyl]-L-lysyl-[protein] + 4 Fe(3+) + 2 hydrogen sulfide + 2 5'-deoxyadenosine + 2 L-methionine + 2 reduced [2Fe-2S]-[ferredoxin]. It functions in the pathway protein modification; protein lipoylation via endogenous pathway; protein N(6)-(lipoyl)lysine from octanoyl-[acyl-carrier-protein]: step 2/2. In terms of biological role, catalyzes the radical-mediated insertion of two sulfur atoms into the C-6 and C-8 positions of the octanoyl moiety bound to the lipoyl domains of lipoate-dependent enzymes, thereby converting the octanoylated domains into lipoylated derivatives. In Neisseria meningitidis serogroup B (strain ATCC BAA-335 / MC58), this protein is Lipoyl synthase.